The sequence spans 461 residues: Ribitol-5-phosphate transferase FKTN (461 aa).

The Cytoplasmic segment spans residues 1 to 7 (MSRINKN). The interval 6 to 27 (KNVVLALLTLTSSAFLLFQLYY) is required and sufficient for interaction with POMGNT1. A helical; Signal-anchor for type II membrane protein transmembrane segment spans residues 8–28 (VVLALLTLTSSAFLLFQLYYY). Over 29-461 (KHYLSTKNGA…SEWDEVIQLY (433 aa)) the chain is Lumenal. Asparagine 92 is a glycosylation site (N-linked (GlcNAc...) asparagine).

This sequence belongs to the LicD transferase family. Forms a complex composed of FKTN/fukutin, FKRP and RXYLT1/TMEM5. Interacts (via transmembrane domain) with POMGNT1; the interaction is direct and is required for normal POMGNT1 location in Golgi membranes. As to expression, expressed in the retina (at protein level). Widely expressed with highest expression in brain, heart, pancreas and skeletal muscle. Expressed at similar levels in control fetal and adult brain. Expressed in migrating neurons, including Cajar-Retzius cells and adult cortical neurons, as well as hippocampal pyramidal cells and cerebellar Purkinje cells. No expression observed in the glia limitans, the subpial astrocytes (which contribute to basement membrane formation) or other glial cells.

It is found in the golgi apparatus membrane. It localises to the cytoplasm. The protein localises to the nucleus. The enzyme catalyses 3-O-[beta-D-GalNAc-(1-&gt;3)-beta-D-GlcNAc-(1-&gt;4)-(O-6-P-alpha-D-Man)]-Thr-[protein] + CDP-L-ribitol = 3-O-[Rib-ol-P-3-beta-D-GalNAc-(1-&gt;3)-beta-D-GlcNAc-(1-&gt;4)-(O-6-P-alpha-D-Man)]-Thr-[protein] + CMP + H(+). The protein operates within protein modification; protein glycosylation. Functionally, catalyzes the transfer of a ribitol-phosphate from CDP-ribitol to the distal N-acetylgalactosamine of the phosphorylated O-mannosyl trisaccharide (N-acetylgalactosamine-beta-3-N-acetylglucosamine-beta-4-(phosphate-6-)mannose), a carbohydrate structure present in alpha-dystroglycan (DAG1). This constitutes the first step in the formation of the ribitol 5-phosphate tandem repeat which links the phosphorylated O-mannosyl trisaccharide to the ligand binding moiety composed of repeats of 3-xylosyl-alpha-1,3-glucuronic acid-beta-1. Required for normal location of POMGNT1 in Golgi membranes, and for normal POMGNT1 activity. May interact with and reinforce a large complex encompassing the outside and inside of muscle membranes. Could be involved in brain development. This is Ribitol-5-phosphate transferase FKTN from Homo sapiens (Human).